Consider the following 189-residue polypeptide: Movement protein (189 aa).

This sequence belongs to the tombusvirus/aureusvirus movement protein p22 family. In terms of assembly, interacts with host protein HFI22. In terms of processing, phosphorylated.

The protein localises to the host membrane. Transports viral genome to neighboring plant cells directly through plasmosdesmata, without any budding. The movement protein allows efficient cell to cell propagation, by bypassing the host cell wall barrier. The sequence is that of Movement protein from Tomato bushy stunt virus (strain BS-3) (TBSV).